A 398-amino-acid chain; its full sequence is MMSDLPRDLLEERLSRVPVKSLREARFTCKNWKTLSKKRSFTKKHLAQEATSRESEFKVVMVLHCKVYLTSINLRGIHNGFDPSINRQAKLVSLNGTDQIDISEVYHCDGLLLCISKDYTRVVVWNPYRSQTLWLKPSSPDHRMDWYICAIGYEKRKSSLRYKVLRFVDFAEEEFVEYEIYELKSNSWRVLDVTSDWEVEFYARGVSLKGNTYWFATDKFPEISSNLIHSVYFLLCFNFTSERFGPRLHLPCYPMDVDTVSLSSVREEQLAVLFQRKDNLHMEIWVTTKIEPEEVMWSKLFLAVDMQPLTDFKFGIADASFIIDEEKKVVVVFAKDKDVMYPTHNTAYIIGEDGYYKEVDLGKTTDKIRDPLVCSYVPSSAQIKQGGKRKKKGKLITD.

Residues 1-45 (MMSDLPRDLLEERLSRVPVKSLREARFTCKNWKTLSKKRSFTKKH) enclose the F-box domain.

This Arabidopsis thaliana (Mouse-ear cress) protein is Putative F-box protein At3g17620.